Here is a 465-residue protein sequence, read N- to C-terminus: ATP synthase subunit beta (465 aa).

Residue 152 to 159 (GGAGVGKT) coordinates ATP.

Belongs to the ATPase alpha/beta chains family. In terms of assembly, F-type ATPases have 2 components, CF(1) - the catalytic core - and CF(0) - the membrane proton channel. CF(1) has five subunits: alpha(3), beta(3), gamma(1), delta(1), epsilon(1). CF(0) has three main subunits: a(1), b(2) and c(9-12). The alpha and beta chains form an alternating ring which encloses part of the gamma chain. CF(1) is attached to CF(0) by a central stalk formed by the gamma and epsilon chains, while a peripheral stalk is formed by the delta and b chains.

The protein resides in the cell inner membrane. The catalysed reaction is ATP + H2O + 4 H(+)(in) = ADP + phosphate + 5 H(+)(out). Produces ATP from ADP in the presence of a proton gradient across the membrane. The catalytic sites are hosted primarily by the beta subunits. This chain is ATP synthase subunit beta, found in Campylobacter jejuni subsp. jejuni serotype O:6 (strain 81116 / NCTC 11828).